A 222-amino-acid chain; its full sequence is Tetratricopeptide repeat protein 9A (222 aa).

Disordered stretches follow at residues 1–49 and 88–116; these read MERK…AAAE and KGLLPPPGERERDSRPASPAGALKPGRLS. The TPR 1 repeat unit spans residues 56-89; it reads RAHEFKSQGAQCYKDKKFREAIGKYHRALLELKG. The residue at position 105 (serine 105) is a Phosphoserine. 2 TPR repeats span residues 125–160 and 161–194; these read AIEIDCYNSLAACLLQAELVNYERVKEYCLKVLKKE and GENFKALYRSGVAFYHLGDYDKALYYLKEARTQQ.

The protein belongs to the TTC9 family.

This chain is Tetratricopeptide repeat protein 9A (TTC9), found in Homo sapiens (Human).